A 227-amino-acid polypeptide reads, in one-letter code: Ribose-5-phosphate isomerase A (227 aa).

Substrate-binding positions include 26-29, 82-85, and 95-98; these read TGST, DGAD, and KGGG. Residue Glu-104 is the Proton acceptor of the active site. Lys-122 serves as a coordination point for substrate.

It belongs to the ribose 5-phosphate isomerase family. Homodimer.

The catalysed reaction is aldehydo-D-ribose 5-phosphate = D-ribulose 5-phosphate. It participates in carbohydrate degradation; pentose phosphate pathway; D-ribose 5-phosphate from D-ribulose 5-phosphate (non-oxidative stage): step 1/1. Functionally, catalyzes the reversible conversion of ribose-5-phosphate to ribulose 5-phosphate. This Streptococcus pyogenes serotype M1 protein is Ribose-5-phosphate isomerase A.